The primary structure comprises 567 residues: TGF-beta receptor type-2 (567 aa).

The first 22 residues, 1-22 (MGRGLLRGLWPLHIVLWTRIAS), serve as a signal peptide directing secretion. Residues 23-166 (TIPPHVQKSV…NPDLLLVIFQ (144 aa)) are Extracellular-facing. 6 disulfide bridges follow: Cys51–Cys84, Cys54–Cys71, Cys61–Cys67, Cys77–Cys101, Cys121–Cys136, and Cys138–Cys143. 2 N-linked (GlcNAc...) asparagine glycosylation sites follow: Asn70 and Asn94. Asn154 carries an N-linked (GlcNAc...) asparagine glycan. Residues 167 to 187 (VTGISLLPPLGVAISVIIIFY) traverse the membrane as a helical segment. At 188-567 (CYRVNRQQKL…PEDGSLNTTK (380 aa)) the chain is on the cytoplasmic side. A Protein kinase domain is found at 244–544 (IELDTLVGKG…AERFSELEHL (301 aa)). Residues 250–258 (VGKGRFAEV) and Lys277 contribute to the ATP site. Residue Asp379 is the Proton acceptor of the active site. Ser409, Ser548, and Ser553 each carry phosphoserine. The sufficient for interaction with CLU stretch occupies residues 439–567 (VESFKQTDVY…PEDGSLNTTK (129 aa)).

This sequence belongs to the protein kinase superfamily. TKL Ser/Thr protein kinase family. TGFB receptor subfamily. Homodimer. Heterohexamer; TGFB1, TGFB2 and TGFB3 homodimeric ligands assemble a functional receptor composed of two TGFBR1 and TGFBR2 heterodimers to form a ligand-receptor heterohexamer. The respective affinity of TGFRB1 and TGFRB2 for the ligands may modulate the kinetics of assembly of the receptor and may explain the different biological activities of TGFB1, TGFB2 and TGFB3. Component of a complex composed of TSC22D1 (via N-terminus), TGFBR1 and TGFBR2; the interaction between TSC22D1 and TGFBR1 is inhibited by SMAD7 and promoted by TGFB1. Interacts with DAXX. Interacts with DYNLT4. Interacts with ZFYVE9; ZFYVE9 recruits SMAD2 and SMAD3 to the TGF-beta receptor. Interacts with and is activated by SCUBE3; this interaction does not affect TGFB1-binding to TGFBR2. Interacts with VPS39; this interaction is independent of the receptor kinase activity and of the presence of TGF-beta. Interacts with CLU. In terms of assembly, homodimer; disulfide-linked. The cofactor is Mg(2+). Mn(2+) serves as cofactor. Post-translationally, phosphorylated on a Ser/Thr residue in the cytoplasmic domain.

It localises to the cell membrane. Its subcellular location is the membrane raft. It is found in the secreted. It catalyses the reaction L-threonyl-[receptor-protein] + ATP = O-phospho-L-threonyl-[receptor-protein] + ADP + H(+). The catalysed reaction is L-seryl-[receptor-protein] + ATP = O-phospho-L-seryl-[receptor-protein] + ADP + H(+). Functionally, transmembrane serine/threonine kinase forming with the TGF-beta type I serine/threonine kinase receptor, TGFBR1, the non-promiscuous receptor for the TGF-beta cytokines TGFB1, TGFB2 and TGFB3. Transduces the TGFB1, TGFB2 and TGFB3 signal from the cell surface to the cytoplasm and thus regulates a plethora of physiological and pathological processes including cell cycle arrest in epithelial and hematopoietic cells, control of mesenchymal cell proliferation and differentiation, wound healing, extracellular matrix production, immunosuppression and carcinogenesis. The formation of the receptor complex composed of 2 TGFBR1 and 2 TGFBR2 molecules symmetrically bound to the cytokine dimer results in the phosphorylation and activation of TGFBR1 by the constitutively active TGFBR2. Activated TGFBR1 phosphorylates SMAD2 which dissociates from the receptor and interacts with SMAD4. The SMAD2-SMAD4 complex is subsequently translocated to the nucleus where it modulates the transcription of the TGF-beta-regulated genes. This constitutes the canonical SMAD-dependent TGF-beta signaling cascade. Also involved in non-canonical, SMAD-independent TGF-beta signaling pathways. In terms of biological role, has transforming growth factor beta-activated receptor activity. Its function is as follows. Binds TGFB1, TGFB2 and TGFB3 in the picomolar affinity range without the participation of additional receptors. Blocks activation of SMAD2 and SMAD3 by TGFB1. The protein is TGF-beta receptor type-2 (TGFBR2) of Homo sapiens (Human).